A 941-amino-acid chain; its full sequence is Cilia- and flagella-associated protein 69 (941 aa).

The protein localises to the cell projection. Its subcellular location is the cilium. It is found in the flagellum. Its function is as follows. Cilium- and flagellum-associated protein. In the olfactory epithelium, regulates the speed of activation and termination of the odor response and thus contributes to the robustness of olfactory transduction pathways. Required for sperm flagellum assembly and stability. The chain is Cilia- and flagella-associated protein 69 from Callithrix jacchus (White-tufted-ear marmoset).